Reading from the N-terminus, the 334-residue chain is Phosphoribosylformylglycinamidine cyclo-ligase (334 aa).

It belongs to the AIR synthase family.

The protein resides in the cytoplasm. The catalysed reaction is 2-formamido-N(1)-(5-O-phospho-beta-D-ribosyl)acetamidine + ATP = 5-amino-1-(5-phospho-beta-D-ribosyl)imidazole + ADP + phosphate + H(+). It participates in purine metabolism; IMP biosynthesis via de novo pathway; 5-amino-1-(5-phospho-D-ribosyl)imidazole from N(2)-formyl-N(1)-(5-phospho-D-ribosyl)glycinamide: step 2/2. The sequence is that of Phosphoribosylformylglycinamidine cyclo-ligase from Thermococcus kodakarensis (strain ATCC BAA-918 / JCM 12380 / KOD1) (Pyrococcus kodakaraensis (strain KOD1)).